Reading from the N-terminus, the 240-residue chain is Ribonuclease HII (240 aa).

In terms of domain architecture, RNase H type-2 spans 7-215 (RYAIGIDEAG…LKRIAPGWYV (209 aa)). Residues aspartate 13, glutamate 14, and aspartate 112 each contribute to the a divalent metal cation site.

It belongs to the RNase HII family. Mn(2+) is required as a cofactor. Mg(2+) serves as cofactor.

The protein resides in the cytoplasm. It carries out the reaction Endonucleolytic cleavage to 5'-phosphomonoester.. Endonuclease that specifically degrades the RNA of RNA-DNA hybrids. This chain is Ribonuclease HII, found in Hyperthermus butylicus (strain DSM 5456 / JCM 9403 / PLM1-5).